A 100-amino-acid chain; its full sequence is NADH-quinone oxidoreductase subunit K (100 aa).

3 consecutive transmembrane segments (helical) span residues 4–24 (YEYY…GVIV), 28–48 (IIAM…AFVA), and 60–80 (VFVF…LGLI).

The protein belongs to the complex I subunit 4L family. In terms of assembly, NDH-1 is composed of 14 different subunits. Subunits NuoA, H, J, K, L, M, N constitute the membrane sector of the complex.

It is found in the cell inner membrane. The enzyme catalyses a quinone + NADH + 5 H(+)(in) = a quinol + NAD(+) + 4 H(+)(out). In terms of biological role, NDH-1 shuttles electrons from NADH, via FMN and iron-sulfur (Fe-S) centers, to quinones in the respiratory chain. The immediate electron acceptor for the enzyme in this species is believed to be ubiquinone. Couples the redox reaction to proton translocation (for every two electrons transferred, four hydrogen ions are translocated across the cytoplasmic membrane), and thus conserves the redox energy in a proton gradient. The polypeptide is NADH-quinone oxidoreductase subunit K (Sulfurihydrogenibium azorense (strain DSM 15241 / OCM 825 / Az-Fu1)).